Here is a 78-residue protein sequence, read N- to C-terminus: MHEQLPLQDRALEARLIELETRLSFQEQALNELSEALADARLTGARNAELIRHLLEDLGKVRSTLFADAVDEPPPPHY.

This sequence belongs to the SlyX family.

The sequence is that of Protein SlyX homolog from Xanthomonas axonopodis pv. citri (strain 306).